The primary structure comprises 152 residues: Protein Turandot X (152 aa).

The N-terminal stretch at Met1–Ala22 is a signal peptide.

This sequence belongs to the Turandot family.

The protein localises to the secreted. Its function is as follows. A humoral factor that may play a role in stress tolerance. In Drosophila erecta (Fruit fly), this protein is Protein Turandot X.